A 596-amino-acid polypeptide reads, in one-letter code: Endoribonuclease ZC3H12A (596 aa).

Disordered regions lie at residues 1-48 (MSDP…TSEL) and 97-134 (QALT…EGSD). Residues 10–19 (VQESNPTMSL) show a composition bias toward polar residues. The interval 42-87 (EAPTSELQMKVDFFRKLGYSSSEIHSVLQKLGVQADTNTVLGELVK) is ubiquitin association domain. A necessary for interaction with TANK region spans residues 81 to 150 (VLGELVKHGS…DGSNVAMSHG (70 aa)). Residues 112–281 (GGSTPKPSTL…DKFMPPDDPL (170 aa)) are RNase. The region spanning 135-290 (LRPVVIDGSN…LGRHGPSLDN (156 aa)) is the RNase NYN domain. Positions 214–220 (RRVGGKR) are RNA binding. Residue aspartate 226 coordinates Mg(2+). Disordered regions lie at residues 278-306 (DDPL…KQPC) and 340-417 (NALL…PTEW). The segment at 301 to 324 (HRKQPCPYGKKCTYGIKCRFFHPE) adopts a C3H1-type zinc-finger fold. A necessary for interaction with ZC3H12D region spans residues 301–454 (HRKQPCPYGK…SELWGVRGGS (154 aa)). Residue serine 344 is modified to Phosphoserine. A compositionally biased stretch (low complexity) spans 356-368 (QRPSPASQSSSVS). Residues serine 435 and serine 439 each carry the phosphoserine modification. Positions 511–543 (YWSEPYPLPPPTPVLQEPQRPSPGAGGGPWGRV) are disordered. The span at 524 to 533 (VLQEPQRPSP) shows a compositional bias: low complexity.

This sequence belongs to the ZC3H12 family. Oligomer. Found in a deubiquitination complex with TANK, USP10 and ZC3H12A; this complex inhibits genotoxic stress- or interleukin-1-beta-mediated NF-kappaB activation by promoting IKBKG or TRAF6 deubiquitination. Interacts with IKBKG; this interaction increases in response to DNA damage. Interacts with TANK; this interaction increases in response to DNA damage and serves as a bridge to anchor both TANK and USP10 into a deubiquitinating complex. Interacts with TRAF6; this interaction increases in response to DNA damage and is stimulated by TANK. Interacts with USP10; this interaction increases in response to DNA damage and serves as a bridge to anchor both TANK and USP10 into a deubiquitinating complex. Interacts with ZC3H12D. Interacts with TNRC6A. Interacts with IKBKB/IKKB. Interacts with IKBKB/IKKB. Interacts with IKBKB/IKKB. Interacts with BTRC; the interaction occurs when ZC3H12A is phosphorylated in a IKBKB/IKKB-dependent manner. Interacts with IRAK1; this interaction increases the interaction between ZC3H12A and IKBKB/IKKB. Interacts with UPF1; this interaction occurs in a mRNA translationally active- and termination-dependent manner and is essential for ZC3H12A-mediated degradation of target mRNAs. Associates with ribosomes. Interacts with ubiquitin. Mg(2+) serves as cofactor. In terms of processing, proteolytically cleaved between Arg-111 and Arg-214 by MALT1 in activated T-cells; cleavage at Arg-111 is critical for promoting ZC3H12A degradation in response to T-cell receptor (TCR) stimulation, and hence is necessary for prolonging the stability of a set of mRNAs controlling T-cell activation and Th17 cell differentiation. Post-translationally, phosphorylated by IRAK1; phosphorylation is necessary for subsequent phosphorylation by the I-kappa-B-kinase (IKK) complex. Phosphorylated by I-kappa-B-kinases (IKKs) at Ser-435 and Ser-439 upon lipopolysaccharide (LPS) or IL1B stimulation in macrophages through the MyD88-dependent signaling pathway; these phosphorylations promote rapid ubiquitin proteasome-mediated degradation of ZC3H12A in macrophages and hence allows its target mRNAs, such as IL6, to escape from degradation and accumulate during the inflammatory response. Ubiquitinated; ubiquitination is induced in response to interleukin IL1 receptor stimuli in a IKBKB/IKKB and IRAK1-dependent manner, leading to proteasome-mediated degradation. Expressed in CD4(+) helper T-cells (at protein level). Highly expressed in macrophages. Expressed in lung, lymph nodes, spleen and thymus. Expressed weakly in heart. Expressed weakly in cardiomyocytes (at protein level). Expressed in spleen, lung, intestine, brown adipose tissue and thymus. Weakly expressed in the heart. Weakly expressed in cardiomyocytes.

It localises to the nucleus. Its subcellular location is the cytoplasm. The protein resides in the rough endoplasmic reticulum membrane. The protein localises to the cytoplasmic granule. It is found in the P-body. Functionally, endoribonuclease involved in various biological functions such as cellular inflammatory response and immune homeostasis, glial differentiation of neuroprogenitor cells, cell death of cardiomyocytes, adipogenesis and angiogenesis. Functions as an endoribonuclease involved in mRNA decay. Modulates the inflammatory response by promoting the degradation of a set of translationally active cytokine-induced inflammation-related mRNAs, such as IL6 and IL12B, during the early phase of inflammation. Prevents aberrant T-cell-mediated immune reaction by degradation of multiple mRNAs controlling T-cell activation, such as those encoding cytokines (IL6 and IL2), cell surface receptors (ICOS, TNFRSF4 and TNFR2) and transcription factor (REL). Inhibits cooperatively with ZC3H12A the differentiation of helper T cells Th17 in lungs. They repress target mRNA encoding the Th17 cell-promoting factors IL6, ICOS, REL, IRF4, NFKBID and NFKBIZ. The cooperation requires RNA-binding by RC3H1 and the nuclease activity of ZC3H12A. Together with RC3H1, destabilizes TNFRSF4/OX40 mRNA by binding to the conserved stem loop structure in its 3'UTR. Self regulates by destabilizing its own mRNA. Cleaves mRNA harboring a stem-loop (SL), often located in their 3'-UTRs, during the early phase of inflammation in a helicase UPF1-dependent manner. Plays a role in the inhibition of microRNAs (miRNAs) biogenesis. Cleaves the terminal loop of a set of precursor miRNAs (pre-miRNAs) important for the regulation of the inflammatory response leading to their degradation, and thus preventing the biosynthesis of mature miRNAs. Also plays a role in promoting angiogenesis in response to inflammatory cytokines by inhibiting the production of antiangiogenic microRNAs via its anti-dicer RNase activity. Affects the overall ubiquitination of cellular proteins. Positively regulates deubiquitinase activity promoting the cleavage at 'Lys-48'- and 'Lys-63'-linked polyubiquitin chains on TNF receptor-associated factors (TRAFs), preventing JNK and NF-kappa-B signaling pathway activation, and hence negatively regulating macrophage-mediated inflammatory response and immune homeostasis. Induces also deubiquitination of the transcription factor HIF1A, probably leading to its stabilization and nuclear import, thereby positively regulating the expression of proangiogenic HIF1A-targeted genes. Involved in a TANK-dependent negative feedback response to attenuate NF-kappaB activation through the deubiquitination of IKBKG or TRAF6 in response to interleukin-1-beta (IL1B) stimulation or upon DNA damage. Prevents stress granules (SGs) formation and promotes macrophage apoptosis under stress conditions, including arsenite-induced oxidative stress, heat shock, and energy deprivation. Plays a role in the regulation of macrophage polarization; promotes IL4-induced polarization of macrophages M1 into anti-inflammatory M2 state. May also act as a transcription factor that regulates the expression of multiple genes involved in inflammatory response, angiogenesis, adipogenesis and apoptosis. Functions as a positive regulator of glial differentiation of neuroprogenitor cells through an amyloid precursor protein (APP)-dependent signaling pathway. Attenuates septic myocardial contractile dysfunction in response to lipopolysaccharide (LPS) by reducing I-kappa-B-kinase (IKK)-mediated NF-kappa-B activation, and hence myocardial pro-inflammatory cytokine production. The chain is Endoribonuclease ZC3H12A from Mus musculus (Mouse).